A 441-amino-acid polypeptide reads, in one-letter code: MKPLSSLLLSAALSAAAPPHPASPQAPLADIPRIGVETRTEFSQNSLDDVVNASPLLSFHRDLVSIESISGNEGAAGAFVADFLESHNFTVIKQPVTTESDARFNIFAFPKSQSHSLDESHPSHGPQILLTSHIDTVPPFIPYSLHRDANDTDDRNILIAGRGTVDAKGSVAAQIFAALDTLAVQPPAPLGLLFVVGEETGGDGMKAFSQSTHLNPSPSRFHTVIFGEPTELALVAGHKGMLGFEVAAHGHAAHSGYPWLGESAISAILPALARVDHLGNIPVEEGGLPASDKYGRTTVNIGQMEGGVAANVVPSEARAGVAVRLAAGTHDEAREIVLKAVRDATGGDDRVVVNFSLEGYGPQDLDTDVAGFNVTTVNYGTDVPNLQLHPRPDGKVKRYLYGPGTIHVAHGDNEALTVAQLEEAVRGYKKLIQAALDRSTS.

A signal peptide spans 1–16 (MKPLSSLLLSAALSAA). Asn88 and Asn150 each carry an N-linked (GlcNAc...) asparagine glycan. Asp166 lines the Zn(2+) pocket. Glu198 (proton acceptor) is an active-site residue. Glu199 contributes to the Zn(2+) binding site. 2 N-linked (GlcNAc...) asparagine glycosylation sites follow: Asn354 and Asn373.

It belongs to the peptidase M20A family. Zn(2+) is required as a cofactor.

The protein resides in the secreted. In Neosartorya fischeri (strain ATCC 1020 / DSM 3700 / CBS 544.65 / FGSC A1164 / JCM 1740 / NRRL 181 / WB 181) (Aspergillus fischerianus), this protein is Probable carboxypeptidase NFIA_052450.